We begin with the raw amino-acid sequence, 723 residues long: ATP-dependent DNA helicase RRM3 (723 aa).

Disordered stretches follow at residues 1–31 (MFRS…SGSH) and 61–101 (DLES…DDDP). Position 64 is a phosphoserine (serine 64). Over residues 83-96 (NNSSSLFSQSQGSF) the composition is skewed to low complexity. 254 to 261 (GSAGTGKS) serves as a coordination point for ATP. A DNA-binding region spans residues 682-701 (QVYVALSRAVTMDTLQVLNF).

It belongs to the helicase family. In terms of assembly, interacts with DEF1 and POL30.

It is found in the nucleus. Its subcellular location is the chromosome. The protein localises to the telomere. It catalyses the reaction Couples ATP hydrolysis with the unwinding of duplex DNA at the replication fork by translocating in the 5'-3' direction. This creates two antiparallel DNA single strands (ssDNA). The leading ssDNA polymer is the template for DNA polymerase III holoenzyme which synthesizes a continuous strand.. It carries out the reaction ATP + H2O = ADP + phosphate + H(+). 5' to 3' DNA replicative helicase recruited to paused replisomes to promote fork progression throughout nonhistone protein-DNA complexes, naturally occurring impediments that are encountered in each S phase where replication forks pauses. Needed for normal fork progression through over 1000 discrete sites scattered throughout the genome, like rDNA, tRNA genes, centromeres, active replication origins, or transcriptional silencers. Required for timely replication of the telomere and subtelomeric DNA and for wild-type levels of telomeric silencing. Involved in regulation of Ty1 transposition and protects the genome from instability at nascent sites of retrotransposition. Involved in DNA repair during stalled replication fork, regulation of fragile sites expression and essential for genome stability. Also plays a role in mtDNA replication. Has G-quadruplex (G4) unwinding activity and can suppress G4-induced genome instability when PIF1 levels are low. In Saccharomyces cerevisiae (strain ATCC 204508 / S288c) (Baker's yeast), this protein is ATP-dependent DNA helicase RRM3.